A 430-amino-acid chain; its full sequence is Inner membrane transport protein YbaT (430 aa).

Over 1 to 14 (MMNTEGNNGNKPLG) the chain is Cytoplasmic. Residues 15 to 35 (LWNVVSIGIGAMVGAGIFALL) traverse the membrane as a helical segment. Topologically, residues 36-38 (GQA) are periplasmic. A helical transmembrane segment spans residues 39–59 (ALLMEASTWVAFAFGGIVAMF). Residues 60 to 88 (SGYAYARLGASYPSNGGIIDFFRRGLGNG) lie on the Cytoplasmic side of the membrane. A helical transmembrane segment spans residues 89 to 109 (VFSLALSLLYLLTLAVSIAMV). Topologically, residues 110-128 (ARAFGAYAVQFLHEGSQEE) are periplasmic. A helical transmembrane segment spans residues 129–149 (HLILLYALGIIAVMTLFNSLS). The Cytoplasmic segment spans residues 150–157 (NHAVGRLE). Residues 158-178 (VILVGIKMMILLLLIIAGVWS) traverse the membrane as a helical segment. The Periplasmic segment spans residues 179–192 (LQPAHISVSAPPSS). Residues 193–213 (GAFFSCIGITFLAYAGFGMMA) traverse the membrane as a helical segment. The Cytoplasmic portion of the chain corresponds to 214–228 (NAADKVKDPQVIMPR). The chain crosses the membrane as a helical span at residues 229–249 (AFLVAIGVTTLLYISLALVLL). At 250-272 (SDVSALELEKYADTAVAQAASPL) the chain is on the periplasmic side. The helical transmembrane segment at 273-293 (LGHVGYVIVVIGALLATASAI) threads the bilayer. Topologically, residues 294-325 (NANLFAVFNIMDNMGSERELPKLMNKSLWRQS) are cytoplasmic. Residues 326 to 346 (TWGNIIVVVLIMLMTAALNLG) traverse the membrane as a helical segment. S347 is a topological domain (periplasmic). A helical membrane pass occupies residues 348–368 (LASVASATFLICYLAVFVVAI). The Cytoplasmic portion of the chain corresponds to 369–379 (RLRHDIHASLP). A helical transmembrane segment spans residues 380–400 (ILIVGTLVMLLVIVGFIYSLW). Topologically, residues 401-403 (SQG) are periplasmic. Residues 404–424 (SRALIWIIGSLLLSLIVAMVM) traverse the membrane as a helical segment. Topologically, residues 425-430 (KRNKTV) are cytoplasmic.

It belongs to the amino acid-polyamine-organocation (APC) superfamily.

It is found in the cell inner membrane. In terms of biological role, probable amino-acid or metabolite transport protein. This chain is Inner membrane transport protein YbaT (ybaT), found in Escherichia coli (strain K12).